Here is a 346-residue protein sequence, read N- to C-terminus: RNA-directed DNA methylation 4 (346 aa).

M1 bears the N-acetylmethionine mark. Composition is skewed to acidic residues over residues 253-268, 278-312, and 323-332; these read FCDG…EDSN, PEEE…DDEE, and GDDEFDDYAE. Positions 253–346 are disordered; it reads FCDGSDESDY…YSESDEEFES (94 aa).

This sequence belongs to the IWR1/SLC7A6OS family. Interacts with NRPD1. Associates with Pol II and Pol V complexes.

Its function is as follows. Probable regulatory factor for several RNA polymerases. Effector involved in facilitation of Pol V transcription as RNA scaffold and recruitment of silencing complex to target genomic sites. This Arabidopsis thaliana (Mouse-ear cress) protein is RNA-directed DNA methylation 4 (RDM4).